The following is a 443-amino-acid chain: Ribulose bisphosphate carboxylase large chain (443 aa).

The substrate site is built by asparagine 89 and threonine 139. The active-site Proton acceptor is lysine 141. Lysine 143 contributes to the substrate binding site. The Mg(2+) site is built by lysine 167, aspartate 169, and glutamate 170. Lysine 167 carries the N6-carboxylysine modification. Histidine 260 functions as the Proton acceptor in the catalytic mechanism. Arginine 261, histidine 293, and serine 345 together coordinate substrate.

The protein belongs to the RuBisCO large chain family. Type I subfamily. Heterohexadecamer of 8 large chains and 8 small chains; disulfide-linked. The disulfide link is formed within the large subunit homodimers. The cofactor is Mg(2+). Post-translationally, the disulfide bond which can form in the large chain dimeric partners within the hexadecamer appears to be associated with oxidative stress and protein turnover.

It is found in the plastid. The protein resides in the chloroplast. The catalysed reaction is 2 (2R)-3-phosphoglycerate + 2 H(+) = D-ribulose 1,5-bisphosphate + CO2 + H2O. It carries out the reaction D-ribulose 1,5-bisphosphate + O2 = 2-phosphoglycolate + (2R)-3-phosphoglycerate + 2 H(+). Functionally, ruBisCO catalyzes two reactions: the carboxylation of D-ribulose 1,5-bisphosphate, the primary event in carbon dioxide fixation, as well as the oxidative fragmentation of the pentose substrate in the photorespiration process. Both reactions occur simultaneously and in competition at the same active site. This chain is Ribulose bisphosphate carboxylase large chain, found in Villarsia calthifolia (Marsh flower).